Here is a 71-residue protein sequence, read N- to C-terminus: V-type proton ATPase subunit e (71 aa).

Residues 1–2 lie on the Lumenal side of the membrane; it reads MS. The chain crosses the membrane as a helical span at residues 3–23; it reads FFHVVFVAFVIAAIGAAGWFV. Residues 24 to 35 are Cytoplasmic-facing; it reads TPKGKNQTLLRT. The chain crosses the membrane as a helical span at residues 36–56; sequence SLLLTLTCCYLMWAITYLCQL. At 57–71 the chain is on the lumenal side; sequence HPLITPRRSDLRMEY.

This sequence belongs to the V-ATPase e1/e2 subunit family. As to quaternary structure, V-ATPase is a heteromultimeric enzyme composed of a peripheral catalytic V1 complex (components A to H) attached to an integral membrane V0 proton pore complex (components: a, c, c', c'', d, e, f and VOA1).

It is found in the vacuole membrane. Functionally, subunit of the V0 complex of vacuolar(H+)-ATPase (V-ATPase), a multisubunit enzyme composed of a peripheral complex (V1) that hydrolyzes ATP and a membrane integral complex (V0) that translocates protons. V-ATPase is responsible for acidifying and maintaining the pH of intracellular compartments. This chain is V-type proton ATPase subunit e (VMA9), found in Cryptococcus neoformans var. neoformans serotype D (strain JEC21 / ATCC MYA-565) (Filobasidiella neoformans).